We begin with the raw amino-acid sequence, 247 residues long: tRNA (guanine-N(1)-)-methyltransferase (247 aa).

An S-adenosyl-L-methionine-binding site is contributed by Gly-126.

The protein belongs to the RNA methyltransferase TrmD family. In terms of assembly, homodimer.

Its subcellular location is the cytoplasm. The catalysed reaction is guanosine(37) in tRNA + S-adenosyl-L-methionine = N(1)-methylguanosine(37) in tRNA + S-adenosyl-L-homocysteine + H(+). In terms of biological role, specifically methylates guanosine-37 in various tRNAs. The sequence is that of tRNA (guanine-N(1)-)-methyltransferase from Jannaschia sp. (strain CCS1).